The sequence spans 494 residues: Ribose import ATP-binding protein RbsA (494 aa).

ABC transporter domains are found at residues 2 to 239 (IDMR…VGRQ) and 251 to 493 (IGEE…TGGN). An ATP-binding site is contributed by 34 to 41 (GENGAGKS).

The protein belongs to the ABC transporter superfamily. Ribose importer (TC 3.A.1.2.1) family. As to quaternary structure, the complex is composed of an ATP-binding protein (RbsA), two transmembrane proteins (RbsC) and a solute-binding protein (RbsB).

Its subcellular location is the cell membrane. It catalyses the reaction D-ribose(out) + ATP + H2O = D-ribose(in) + ADP + phosphate + H(+). Its function is as follows. Part of the ABC transporter complex RbsABC involved in ribose import. Responsible for energy coupling to the transport system. The chain is Ribose import ATP-binding protein RbsA from Geobacillus kaustophilus (strain HTA426).